Here is a 510-residue protein sequence, read N- to C-terminus: Ent-sandaracopimaradiene 3-hydroxylase (510 aa).

A helical transmembrane segment spans residues Met4–Ala24. Cys454 lines the heme pocket.

Belongs to the cytochrome P450 family. Interacts with the rice dwarf virus (RDV) P2 protein. The cofactor is heme. Expressed in leaf blades and sheaths, stems and panicles.

Its subcellular location is the membrane. It catalyses the reaction ent-sandaracopimara-8(14),15-diene + reduced [NADPH--hemoprotein reductase] + O2 = ent-sandaracopimaradien-3beta-ol + oxidized [NADPH--hemoprotein reductase] + H2O + H(+). The catalysed reaction is 9beta-pimara-7,15-diene + reduced [NADPH--hemoprotein reductase] + O2 = 9beta-pimara-7,15-diene-3beta-ol + oxidized [NADPH--hemoprotein reductase] + H2O + H(+). Catalyzes the hydroxylation of ent-sandaracopimaradiene at the C3alpha position to produce ent-3beta-hydroxy-sandaracopimaradiene, an intermediates for the biosynthesis of oryzalexin D and oryzalexin E phytoalexins. Catalyzes the hydroxylation of ent-cassadiene at the C3alpha position to produce 3alpha-hydroxy-ent-cassadiene, which may be an intermediate for the biosynthesis of phytocassane phytoalexins. Catalyzes the hydroxylation of syn-pimaradiene (9-beta-pimara-7,15-diene) at the C3beta position to produce 3-beta-syn-pimaradiene. Can hydroxylate ent-kaurene in vitro, but the product is not ent-kauren-19-ol as expected for ent-kaurene oxidase activity. This Oryza sativa subsp. japonica (Rice) protein is Ent-sandaracopimaradiene 3-hydroxylase.